The chain runs to 104 residues: NADH-quinone oxidoreductase subunit K (104 aa).

3 helical membrane passes run 7–27 (LSHY…GIFL), 33–53 (IVIL…LVSF), and 67–87 (LLVL…LVVF).

It belongs to the complex I subunit 4L family. NDH-1 is composed of 14 different subunits. Subunits NuoA, H, J, K, L, M, N constitute the membrane sector of the complex.

It is found in the cell inner membrane. It catalyses the reaction a quinone + NADH + 5 H(+)(in) = a quinol + NAD(+) + 4 H(+)(out). Functionally, NDH-1 shuttles electrons from NADH, via FMN and iron-sulfur (Fe-S) centers, to quinones in the respiratory chain. The immediate electron acceptor for the enzyme in this species is believed to be ubiquinone. Couples the redox reaction to proton translocation (for every two electrons transferred, four hydrogen ions are translocated across the cytoplasmic membrane), and thus conserves the redox energy in a proton gradient. This is NADH-quinone oxidoreductase subunit K from Xanthobacter autotrophicus (strain ATCC BAA-1158 / Py2).